A 446-amino-acid chain; its full sequence is NADH-ubiquinone oxidoreductase chain 4 (446 aa).

14 consecutive transmembrane segments (helical) span residues 4–24, 28–48, 56–76, 88–105, 109–131, 141–161, 182–202, 218–238, 245–265, 272–292, 297–317, 330–350, 373–393, and 426–446; these read LILM…FWMV, LFVI…FVNI, VLSY…IVAS, LFLF…LTFS, LFMF…LGWG, VYLL…IFYL, LLYL…LVHL, ILAG…FSFL, YNYI…LVCL, ALIA…LMTL, LSGS…LFCL, LLIN…WFLL, IVSW…FSAA, and FLHW…LFWI.

The protein belongs to the complex I subunit 4 family.

It localises to the mitochondrion membrane. The catalysed reaction is a ubiquinone + NADH + 5 H(+)(in) = a ubiquinol + NAD(+) + 4 H(+)(out). Core subunit of the mitochondrial membrane respiratory chain NADH dehydrogenase (Complex I) that is believed to belong to the minimal assembly required for catalysis. Complex I functions in the transfer of electrons from NADH to the respiratory chain. The immediate electron acceptor for the enzyme is believed to be ubiquinone. This Ceratitis capitata (Mediterranean fruit fly) protein is NADH-ubiquinone oxidoreductase chain 4 (ND4).